The chain runs to 271 residues: uncharacterized protein (271 aa).

It belongs to the HAD-like hydrolase superfamily.

This is an uncharacterized protein from Staphylococcus aureus (strain NCTC 8325 / PS 47).